A 354-amino-acid polypeptide reads, in one-letter code: Fructose-bisphosphate aldolase (354 aa).

Ser-50 is a binding site for D-glyceraldehyde 3-phosphate. Catalysis depends on Asp-83, which acts as the Proton donor. 4 residues coordinate Zn(2+): His-84, Asp-105, Glu-142, and His-198. A dihydroxyacetone phosphate-binding site is contributed by Gly-199. His-232 contributes to the Zn(2+) binding site. Dihydroxyacetone phosphate is bound by residues 233-235 (GSS) and 275-278 (NIDT).

Belongs to the class II fructose-bisphosphate aldolase family. Zn(2+) serves as cofactor.

It catalyses the reaction beta-D-fructose 1,6-bisphosphate = D-glyceraldehyde 3-phosphate + dihydroxyacetone phosphate. It functions in the pathway carbohydrate degradation; glycolysis; D-glyceraldehyde 3-phosphate and glycerone phosphate from D-glucose: step 4/4. In terms of biological role, catalyzes the aldol condensation of dihydroxyacetone phosphate (DHAP or glycerone-phosphate) with glyceraldehyde 3-phosphate (G3P) to form fructose 1,6-bisphosphate (FBP) in gluconeogenesis and the reverse reaction in glycolysis. This is Fructose-bisphosphate aldolase (fba) from Stutzerimonas stutzeri (Pseudomonas stutzeri).